Here is a 118-residue protein sequence, read N- to C-terminus: Cytochrome b-c1 complex subunit 7 (118 aa).

The segment at 1 to 32 is igE-binding. Immunodominant epitope; induces specific IgE antibody production in mice. Causes degranulation of rat basophilic leukemia (RBL) cells and the release of beta-hexosaminidase from them; sequence MVHLTKTLRFINNPGFRKFYYGLQGYNKYGLY.

It belongs to the UQCRB/QCR7 family. In terms of assembly, component of the ubiquinol-cytochrome c oxidoreductase (cytochrome b-c1 complex, complex III, CIII), a multisubunit enzyme composed of 3 respiratory subunits cytochrome b, cytochrome c1 and Rieske protein, 2 core protein subunits, and additional low-molecular weight protein subunits. The complex exists as an obligatory dimer and forms supercomplexes (SCs) in the inner mitochondrial membrane with cytochrome c oxidase (complex IV, CIV).

The protein resides in the mitochondrion inner membrane. Its function is as follows. Component of the ubiquinol-cytochrome c oxidoreductase, a multisubunit transmembrane complex that is part of the mitochondrial electron transport chain which drives oxidative phosphorylation. The respiratory chain contains 3 multisubunit complexes succinate dehydrogenase (complex II, CII), ubiquinol-cytochrome c oxidoreductase (cytochrome b-c1 complex, complex III, CIII) and cytochrome c oxidase (complex IV, CIV), that cooperate to transfer electrons derived from NADH and succinate to molecular oxygen, creating an electrochemical gradient over the inner membrane that drives transmembrane transport and the ATP synthase. The cytochrome b-c1 complex catalyzes electron transfer from ubiquinol to cytochrome c, linking this redox reaction to translocation of protons across the mitochondrial inner membrane, with protons being carried across the membrane as hydrogens on the quinol. In the process called Q cycle, 2 protons are consumed from the matrix, 4 protons are released into the intermembrane space and 2 electrons are passed to cytochrome c. In Dermatophagoides farinae (American house dust mite), this protein is Cytochrome b-c1 complex subunit 7.